A 303-amino-acid chain; its full sequence is Glycine--tRNA ligase alpha subunit (303 aa).

Belongs to the class-II aminoacyl-tRNA synthetase family. As to quaternary structure, tetramer of two alpha and two beta subunits.

The protein localises to the cytoplasm. The catalysed reaction is tRNA(Gly) + glycine + ATP = glycyl-tRNA(Gly) + AMP + diphosphate. This chain is Glycine--tRNA ligase alpha subunit, found in Syntrophomonas wolfei subsp. wolfei (strain DSM 2245B / Goettingen).